Reading from the N-terminus, the 325-residue chain is MATH domain and coiled-coil domain-containing protein At3g58340 (325 aa).

The MATH domain maps to 6–131; that stretch reads DKKFCWEIKN…NGQVMIVAEV (126 aa). Residues 266-315 are a coiled coil; the sequence is KVDWLEKKLDHVKEKKEKEQSGLIILQGIEQQLHELMHKCEKKKSEVLSV.

The chain is MATH domain and coiled-coil domain-containing protein At3g58340 from Arabidopsis thaliana (Mouse-ear cress).